The following is a 1207-amino-acid chain: RNA-binding protein 20 (1207 aa).

The disordered stretch occupies residues 1–58; sequence MVLAAAMSQDADPSGPEQPDRDACIVPGVQGPPAPQGQQGMQPLPPPLPPPPQPQSSL. Positions 43–54 are enriched in pro residues; sequence PLPPPLPPPPQP. The segment at 412-446 adopts a U1-type zinc-finger fold; that stretch reads HLPHICSICDKKVFDLKDWELHVKGKLHAQKCLLF. An RRM domain is found at 521–596; sequence RVVHICNLPE…EKLLIRMSTR (76 aa). Over residues 625–637 the composition is skewed to basic and acidic residues; that stretch reads LREADRYGPERPR. 3 disordered regions span residues 625–686, 722–896, and 951–1110; these read LREA…NGED, EKYL…MEEL, and QGET…AELK. The segment at 631–650 is RS; sequence YGPERPRSRSPMSRSLSPRS. Phosphoserine is present on residues Ser638, Ser640, Ser643, Ser645, and Ser652. The span at 639–650 shows a compositional bias: low complexity; it reads RSPMSRSLSPRS. Over residues 668–686 the composition is skewed to basic and acidic residues; it reads YAWRDEDRETVPRRENGED. Ser729 is subject to Phosphoserine. Composition is skewed to basic and acidic residues over residues 740–759, 772–789, and 796–836; these read KGRE…DKHP, RKEE…PEDS, and EPKV…RGAE. At Ser789 the chain carries Phosphoserine. The segment covering 839–848 has biased composition (acidic residues); it reads AGTEEQEGME. A phosphoserine mark is found at Ser853 and Ser864. The segment covering 853 to 863 has biased composition (polar residues); sequence SVGTQQEGTES. Residues 867 to 876 show a composition bias toward basic and acidic residues; sequence ENTRTKKGQD. Residues Ser879, Ser881, and Ser963 each carry the phosphoserine modification. Over residues 970–979 the composition is skewed to polar residues; the sequence is VPSTSTSCPN. The residue at position 999 (Ser999) is a Phosphoserine. The span at 1011 to 1022 shows a compositional bias: basic and acidic residues; it reads YEKEARGAEGSD. A phosphoserine mark is found at Ser1034, Ser1046, Ser1057, Ser1066, Ser1078, Ser1096, and Ser1101. Positions 1050–1072 are enriched in basic and acidic residues; that stretch reads DDCKARGSPEDGPHEVSPLEEKA. Residues 1073–1102 are compositionally biased toward polar residues; it reads SPTTESDLQSQACQENSRYTETRSLNSRSP. The segment at 1141–1172 adopts a Matrin-type zinc-finger fold; that stretch reads FYCKLCGLFYTSEEAAKVSHCRSTVHYRNLQK. The disordered stretch occupies residues 1181–1207; sequence GLKETEGVDSPSPERSGIGPHLERKKL. A phosphoserine mark is found at Ser1190 and Ser1192.

As to quaternary structure, associates with components of the U1 and U2 U1 small nuclear ribonucleoprotein complexes. In terms of processing, phosphorylation regulates the subcellular localization. Phosphorylation of Ser-638 and Ser-640 in the RS (arginine/serine-rich) region promotes nuclear localization of the protein. In contrast, phosphorylation of the C-terminal disordered region promotes localization to cytoplasmic ribonucleoprotein granules.

The protein localises to the nucleus. The protein resides in the cytoplasm. Its subcellular location is the cytoplasmic ribonucleoprotein granule. RNA-binding protein that acts as a regulator of mRNA splicing of a subset of genes encoding key structural proteins involved in cardiac development, such as TTN (Titin), CACNA1C, CAMK2D or PDLIM5/ENH. Acts as a repressor of mRNA splicing: specifically binds the 5'UCUU-3' motif that is predominantly found within intronic sequences of pre-mRNAs, leading to the exclusion of specific exons in target transcripts. RBM20-mediated exon skipping is hormone-dependent and is essential for TTN isoform transition in both cardiac and skeletal muscles. RBM20-mediated exon skipping of TTN provides substrates for the formation of circular RNA (circRNAs) from the TTN transcripts. Together with RBM24, promotes the expression of short isoforms of PDLIM5/ENH in cardiomyocytes. The polypeptide is RNA-binding protein 20 (Rattus norvegicus (Rat)).